Consider the following 397-residue polypeptide: Argininosuccinate synthase (397 aa).

Residues 9–17 and A35 each bind ATP; that span reads AFSGGLDTS. Residues Y88 and S93 each contribute to the L-citrulline site. Position 117 (G117) interacts with ATP. Positions 119, 123, and 124 each coordinate L-aspartate. N123 lines the L-citrulline pocket. Residue R127 participates in L-citrulline binding.

Belongs to the argininosuccinate synthase family. Type 1 subfamily. Homotetramer.

Its subcellular location is the cytoplasm. It carries out the reaction L-citrulline + L-aspartate + ATP = 2-(N(omega)-L-arginino)succinate + AMP + diphosphate + H(+). It participates in amino-acid biosynthesis; L-arginine biosynthesis; L-arginine from L-ornithine and carbamoyl phosphate: step 2/3. This is Argininosuccinate synthase from Xanthomonas campestris pv. campestris (strain ATCC 33913 / DSM 3586 / NCPPB 528 / LMG 568 / P 25).